We begin with the raw amino-acid sequence, 247 residues long: Probable dihydroorotate dehydrogenase B (NAD(+)), electron transfer subunit (247 aa).

In terms of domain architecture, FAD-binding FR-type spans 1–87; it reads MLRRVMIKET…RGPYGNGFKS (87 aa). The [2Fe-2S] cluster site is built by Cys-200, Cys-205, Cys-208, and Cys-216.

Belongs to the PyrK family. In terms of assembly, heterotetramer of 2 PyrK and 2 PyrD type B subunits. [2Fe-2S] cluster serves as cofactor. FAD is required as a cofactor.

Its pathway is pyrimidine metabolism; UMP biosynthesis via de novo pathway; orotate from (S)-dihydroorotate (NAD(+) route): step 1/1. Its function is as follows. Responsible for channeling the electrons from the oxidation of dihydroorotate from the FMN redox center in the PyrD type B subunit to the ultimate electron acceptor NAD(+). The chain is Probable dihydroorotate dehydrogenase B (NAD(+)), electron transfer subunit from Pyrococcus abyssi (strain GE5 / Orsay).